Consider the following 386-residue polypeptide: Zinc transporter 7-A (386 aa).

Over 1 to 37 (MLPLSIKDDEYKPPKFNLARKVSGWIRSIFSDSTSRN) the chain is Cytoplasmic. The helical transmembrane segment at 38-58 (LFCFLCLNLSFAFVELFYGIW) threads the bilayer. Over 59-67 (SNSLGLISD) the chain is Lumenal. Residues 68-88 (SFHMFFDCTALLAGLAASVIS) form a helical membrane-spanning segment. The Cytoplasmic portion of the chain corresponds to 89-102 (RWKTNEAFSYGYVR). The chain crosses the membrane as a helical span at residues 103-123 (AEVLAGFVNGLFLIFTAFFIF). At 124 to 140 (SEGVERALDTPEVHHER) the chain is on the lumenal side. Residues 141–161 (LLPVSIMGLLVNIIGIFVFQH) traverse the membrane as a helical segment. Positions 161–222 (HGGGHGHSHE…GHSHDHSPKH (62 aa)) are his-rich loop. At 162 to 246 (GGGHGHSHES…KGSSKQILEG (85 aa)) the chain is on the cytoplasmic side. The segment at 167–239 (HSHESGHGHS…DEPPEEHKGS (73 aa)) is disordered. Positions 228-238 (CHDEPPEEHKG) are enriched in basic and acidic residues. The chain crosses the membrane as a helical span at residues 247–267 (VFLHIVADTLGSVGVIFSTIL). Over 268–272 (MQRYG) the chain is Lumenal. The helical transmembrane segment at 273–293 (LMIADPICSMLIALLIFVSVI) threads the bilayer. At 294-386 (PLLKQSIGIL…LYVQIDFAAI (93 aa)) the chain is on the cytoplasmic side.

Belongs to the cation diffusion facilitator (CDF) transporter (TC 2.A.4) family. SLC30A subfamily. In terms of assembly, homooligomer.

It localises to the golgi apparatus membrane. Its subcellular location is the cytoplasmic vesicle. The protein localises to the golgi apparatus. It is found in the trans-Golgi network. The protein resides in the sarcoplasmic reticulum. It localises to the mitochondrion. It carries out the reaction Zn(2+)(in) = Zn(2+)(out). In terms of biological role, zinc ion transporter mediating zinc entry from the cytosol into the lumen of organelles along the secretory pathway. By contributing to zinc ion homeostasis within the early secretory pathway, regulates the activation and folding of enzymes like alkaline phosphatases. This is Zinc transporter 7-A (slc30a7-a) from Xenopus laevis (African clawed frog).